We begin with the raw amino-acid sequence, 578 residues long: Moesin/ezrin/radixin homolog 1 (578 aa).

The region spanning 1–296 (MSPKALNVRV…GNHELYMRRR (296 aa)) is the FERM domain. A disordered region spans residues 463-555 (ASTTPQHHHV…HRENVRQGRD (93 aa)). Residues 475–484 (DENENEEELT) show a composition bias toward acidic residues. Residues 492-555 (VSRDLDTDEH…HRENVRQGRD (64 aa)) are compositionally biased toward basic and acidic residues. Thr-559 bears the Phosphothreonine mark.

As to quaternary structure, interacts with wgn. Interacts with Mer and arm at the adherens junction. Interacts with cytoskeletal actin at apical buds of microvilli in the precellularised embryo. Interacts with PCID2 (possibly via FERM domain). In terms of processing, phosphorylated on Thr-559. In the oocyte this phosphorylation is induced by phosphatidylinositol 4,5-bisphosphate (PtdIns[4,5]P(2)) generated by sktl.

The protein resides in the cell junction. It is found in the adherens junction. Its subcellular location is the cell projection. The protein localises to the microvillus. It localises to the rhabdomere. The protein resides in the cell membrane. It is found in the cytoplasm. Its subcellular location is the cytoskeleton. The protein localises to the cell cortex. It localises to the cilium. The protein resides in the flagellum. It is found in the nucleus. Its subcellular location is the nucleoplasm. The protein localises to the chromosome. Its function is as follows. Involved in connections of major cytoskeletal structures to the plasma membrane. Together with wgn, involved in control of axon targeting of R8 and R2-R5 photoreceptors, independent of egr. In the nucleus, recruited to sites of active transcription by RNA polymerase II where it has a role in nuclear mRNA export together with the mRNA export factor PCID2 and other messenger ribonucleoprotein (mRNP) particles. This is Moesin/ezrin/radixin homolog 1 (Moe) from Drosophila melanogaster (Fruit fly).